The following is a 346-amino-acid chain: KH domain-containing, RNA-binding, signal transduction-associated protein 3 (346 aa).

An involved in homodimerization region spans residues methionine 1–asparagine 160. A Glycyl lysine isopeptide (Lys-Gly) (interchain with G-Cter in SUMO2) cross-link involves residue lysine 4. The KH domain maps to leucine 61–leucine 127. Positions arginine 212–proline 251 are interaction with SIAH1. Residues proline 213–valine 228 are compositionally biased toward low complexity. 2 disordered regions span residues proline 213–glycine 267 and glutamine 318–tyrosine 346. Pro residues predominate over residues glycine 253 to threonine 262.

The protein belongs to the KHDRBS family. Self-associates to form homooligomers; dimerization increases RNA affinity. Interacts with KHDRBS2/SLM-1. Interacts with KHDRBS1/SAM68; heterooligomer formation of KHDRBS family proteins may modulate RNA substrate specificity. Interacts with the splicing regulatory proteins SFRS9, SAFB and YTHDC1. Interacts with HNRPL. Interacts with RBMX, RBMY1A1, p85 subunit of PI3-kinase, SERPINB5. Interacts with SIAH1 which promotes targeting for degradation. Post-translationally, phosphorylated on tyrosine residues. Isoform 1 C-terminal region is tyrosine-rich, but isoform 2 lacking this C-terminal region is also tyrosine-phosphorylated. As to expression, ubiquitous with higher expression in testis, skeletal muscle and brain. Expressed in the kidney only in podocytes, the glomerular epithelial cells of the kidney. Strongly expressed after meiosis.

It is found in the nucleus. RNA-binding protein that plays a role in the regulation of alternative splicing and influences mRNA splice site selection and exon inclusion. Binds preferentially to the 5'-[AU]UAAA-3' motif in vitro. Binds optimally to RNA containing 5'-[AU]UAA-3' as a bipartite motif spaced by more than 15 nucleotides. Binds poly(A). RNA-binding abilities are down-regulated by tyrosine kinase PTK6. Involved in splice site selection of vascular endothelial growth factor. In vitro regulates CD44 alternative splicing by direct binding to purine-rich exonic enhancer. Can regulate alternative splicing of neurexins NRXN1-3 in the laminin G-like domain 6 containing the evolutionary conserved neurexin alternative spliced segment 4 (AS4) involved in neurexin selective targeting to postsynaptic partners such as neuroligins and LRRTM family members. Targeted, cell-type specific splicing regulation of NRXN1 at AS4 is involved in neuronal glutamatergic synapse function and plasticity. May regulate expression of KHDRBS2/SLIM-1 in defined brain neuron populations by modifying its alternative splicing. Can bind FABP9 mRNA. May play a role as a negative regulator of cell growth. Inhibits cell proliferation. Its function is as follows. (Microbial infection) Involved in post-transcriptional regulation of HIV-1 gene expression. This is KH domain-containing, RNA-binding, signal transduction-associated protein 3 (KHDRBS3) from Homo sapiens (Human).